The chain runs to 362 residues: Adenosine deaminase (362 aa).

His19 and His21 together coordinate Zn(2+). 3 residues coordinate substrate: His21, Asp23, and Gly181. A Zn(2+)-binding site is contributed by His208. Residue Glu211 is the Proton donor of the active site. Residue Asp300 coordinates Zn(2+).

This sequence belongs to the metallo-dependent hydrolases superfamily. Adenosine and AMP deaminases family. Adenosine deaminase subfamily. The cofactor is Zn(2+).

The enzyme catalyses adenosine + H2O + H(+) = inosine + NH4(+). It catalyses the reaction 2'-deoxyadenosine + H2O + H(+) = 2'-deoxyinosine + NH4(+). Functionally, catalyzes the hydrolytic deamination of adenosine and 2-deoxyadenosine. The sequence is that of Adenosine deaminase from Mycobacterium sp. (strain MCS).